The primary structure comprises 711 residues: Polyribonucleotide nucleotidyltransferase (711 aa).

Residues Asp486 and Asp492 each contribute to the Mg(2+) site. Positions 553 to 612 (PRIHTIKINPDKIKDVIGKGGSVIRALTEETGTTIEIEDDGTVKIAATDGDKAQHAIRRI) constitute a KH domain. An S1 motif domain is found at 622–690 (GRIYNGKVTR…RQGRVRLSIK (69 aa)). Residues 691–711 (EATEQTPSAAAPEAPVAEQGE) form a disordered region. Over residues 699–711 (AAAPEAPVAEQGE) the composition is skewed to low complexity.

Belongs to the polyribonucleotide nucleotidyltransferase family. As to quaternary structure, component of the RNA degradosome, which is a multiprotein complex involved in RNA processing and mRNA degradation. Mg(2+) is required as a cofactor.

Its subcellular location is the cytoplasm. The catalysed reaction is RNA(n+1) + phosphate = RNA(n) + a ribonucleoside 5'-diphosphate. Functionally, involved in mRNA degradation. Catalyzes the phosphorolysis of single-stranded polyribonucleotides processively in the 3'- to 5'-direction. This Klebsiella pneumoniae (strain 342) protein is Polyribonucleotide nucleotidyltransferase.